We begin with the raw amino-acid sequence, 253 residues long: Small ribosomal subunit protein uS2 (253 aa).

This sequence belongs to the universal ribosomal protein uS2 family.

This chain is Small ribosomal subunit protein uS2, found in Hahella chejuensis (strain KCTC 2396).